We begin with the raw amino-acid sequence, 251 residues long: Gamma-glutamyl peptidase 5 (251 aa).

The Glutamine amidotransferase type-1 domain occupies 17–214 (STFVKKAYGG…IDRVVNLKLM (198 aa)). Cys-101 functions as the Nucleophile in the catalytic mechanism. Active-site residues include His-193 and Glu-195.

The protein belongs to the peptidase C26 family.

It localises to the cytoplasm. The protein localises to the cytosol. The protein operates within secondary metabolite biosynthesis. Involved in glucosinolate biosynthesis. Hydrolyzes the gamma-glutamyl peptide bond of several glutathione (GSH) conjugates to produce Cys-Gly conjugates related to glucosinolates. The gamma-Glu-Cys-Gly-GSH conjugates are the sulfur-donating molecule in glucosinolate biosynthesis. This Arabidopsis thaliana (Mouse-ear cress) protein is Gamma-glutamyl peptidase 5.